A 580-amino-acid polypeptide reads, in one-letter code: Rap guanine nucleotide exchange factor 5 (580 aa).

Positions D68–G201 constitute an N-terminal Ras-GEF domain. The Ras-GEF domain maps to N345 to R579.

As to expression, widely expressed with highest levels in brain.

The protein localises to the nucleus. Guanine nucleotide exchange factor (GEF) for RAP1A, RAP2A and MRAS/M-Ras-GTP. Its association with MRAS inhibits Rap1 activation. This chain is Rap guanine nucleotide exchange factor 5 (RAPGEF5), found in Homo sapiens (Human).